We begin with the raw amino-acid sequence, 575 residues long: Cyclic nucleotide-gated channel alpha-4 (575 aa).

Residues 1-38 are Cytoplasmic-facing; it reads MSQDSKVKTTESTPPAPTKARKWLPVLDPSGDYYYWWL. A helical transmembrane segment spans residues 39 to 60; the sequence is NTMVFPIMYNLIIVVCRACFPD. The Extracellular segment spans residues 61–70; it reads LQHSYLVAWF. A helical transmembrane segment spans residues 71 to 91; that stretch reads VLDYTSDLLYLLDIGVRFHTG. The Cytoplasmic portion of the chain corresponds to 92-116; it reads FLEQGILVVDKSMIASRYVRTWSFL. A helical transmembrane segment spans residues 117–135; the sequence is LDLASLVPTDAAYVQLGPH. At 136-140 the chain is on the extracellular side; sequence IPTLR. The chain crosses the membrane as a helical span at residues 141-159; the sequence is LNRFLRVPRLFEAFDRTET. The Cytoplasmic segment spans residues 160–166; sequence RTAYPNA. An ion conduction pathway region spans residues 164–272; it reads PNAFRIAKLM…GSMSSVIYNM (109 aa). Residues 167-190 traverse the membrane as a helical segment; the sequence is FRIAKLMIYIFVVIHWNSCLYFAL. At 191–213 the chain is on the extracellular side; sequence SRYLGFGRDAWVYPDPAQPGFER. 2 helical membrane-spanning segments follow: residues 214–248 and 249–273; these read LRRQYLYSFYFSTLILTTVGDTPLPAREEEYLFMV and GDFLLAVMGFATIMGSMSSVIYNMN. Positions 231-234 are selectivity filter; sequence TVGD. The C-linker stretch occupies residues 274 to 350; it reads TADAAFYPDH…STLSRVQIFQ (77 aa). Residues 274–575 lie on the Cytoplasmic side of the membrane; sequence TADAAFYPDH…AGQEGPSGLE (302 aa). Residues 292 to 302 carry the IQ-type motif; sequence LQHVNRRLERR. 348–471 is an a nucleoside 3',5'-cyclic phosphate binding site; it reads IFQNCEASLL…AVMEEKGREI (124 aa). The interval 354–474 is cyclic nucleotide-binding domain; sequence ASLLEELVLK…EEKGREILLK (121 aa). G414, S417, R430, and T431 together coordinate 3',5'-cyclic GMP. 3',5'-cyclic AMP-binding residues include R430 and T431. The stretch at 493 to 547 forms a coiled coil; sequence TESRLKGLDQQLDDLQTKFARLLAELESSALKIAYRIERLEWQTREWPMPDDMGE. Residues 536 to 575 are disordered; the sequence is TREWPMPDDMGEADDEAEPGEGTSKDGEEKAGQEGPSGLE. Acidic residues predominate over residues 544–554; sequence DMGEADDEAEP. Basic and acidic residues predominate over residues 558-567; it reads TSKDGEEKAG.

The protein belongs to the cyclic nucleotide-gated cation channel (TC 1.A.1.5) family. CNGA4 subfamily. As to quaternary structure, the olfactory cyclic nucleotide-gated channel is an heterotetramer composed of CNGA2, CNGA4 and CNGB1b subunits with 2:1:1 stoichiometry. In terms of tissue distribution, expressed in the olfactory epithelium.

The protein resides in the cell projection. The protein localises to the cilium membrane. The enzyme catalyses Ca(2+)(in) = Ca(2+)(out). It catalyses the reaction Na(+)(in) = Na(+)(out). It carries out the reaction K(+)(in) = K(+)(out). The catalysed reaction is NH4(+)(in) = NH4(+)(out). The enzyme catalyses Rb(+)(in) = Rb(+)(out). It catalyses the reaction Li(+)(in) = Li(+)(out). It carries out the reaction Cs(+)(in) = Cs(+)(out). Ca(2+)-calmodulin exerts its inhibitory effect in cAMP sensitivity by binding to IQ-like motif of CNGA4 and preferably binds to the channel in the closed state. Inhibition by PIP3 of the CNG channel probably occurs via CGNA2 binding. In terms of biological role, pore-forming subunit of the olfactory cyclic nucleotide-gated channel. Operates in the cilia of olfactory sensory neurons where chemical stimulation of the odorant is converted to an electrical signal. Mediates odorant-induced cAMP-dependent Ca(2+) influx triggering neuron depolarization. The rise of intracellular Ca(2+) levels potentiates the olfactory response by activating Ca(2+)-dependent Cl(-) channels, but it also serves as a negative feedback signal to desensitize the channel for rapid adaptation to odorants. Conducts cGMP- and cAMP-gated ion currents, with permeability for monovalent and divalent cations. Conducts cAMP- and cGMP-gated ion currents, with permeability for monovalent and divalent cations. May conduct nitric oxide-gated Ca(2+) currents relevant to neurons of vomeronasal organ, a system involved in the perception of pheromones. The polypeptide is Cyclic nucleotide-gated channel alpha-4 (Mus musculus (Mouse)).